Consider the following 345-residue polypeptide: G-protein coupled receptor family C group 5 member D (345 aa).

Over 1–27 (MYKDCIESTGDYFLLCDAEGPWGIILE) the chain is Extracellular. Residues 28-48 (SLAILGIVVTILLLLAFLFLM) form a helical membrane-spanning segment. The Cytoplasmic segment spans residues 49–63 (RKIQDCSQWNVLPTQ). The chain crosses the membrane as a helical span at residues 64-84 (LLFLLSVLGLFGLAFAFIIEL). Residues 85-93 (NQQTAPVRY) lie on the Extracellular side of the membrane. Residues 94 to 114 (FLFGVLFALCFSCLLAHASNL) traverse the membrane as a helical segment. Residues 115–123 (VKLVRGCVS) are Cytoplasmic-facing. A helical membrane pass occupies residues 124–144 (FSWTTILCIAIGCSLLQIIIA). Residues 145–167 (TEYVTLIMTRGMMFVNMTPCQLN) lie on the Extracellular side of the membrane. A helical membrane pass occupies residues 168 to 188 (VDFVVLLVYVLFLMALTFFVS). Over 189 to 204 (KATFCGPCENWKQHGR) the chain is Cytoplasmic. The helical transmembrane segment at 205–225 (LIFITVLFSIIIWVVWISMLL) threads the bilayer. The Extracellular segment spans residues 226 to 239 (RGNPQFQRQPQWDD). Residues 240–260 (PVVCIALVTNAWVFLLLYIVP) form a helical membrane-spanning segment. Over 261 to 345 (ELCILYRSCR…LSPQQDAGGV (85 aa)) the chain is Cytoplasmic.

This sequence belongs to the G-protein coupled receptor 3 family. As to quaternary structure, homodimer. In terms of tissue distribution, widely expressed in the peripheral system. Expression pattern is high in pancreas, medium in kidney, small intestine, spleen and testis, low in lung, colon, leukocyte, prostate and thymus and not detectable in brain, heart, liver, placenta, skeletal muscle and ovary.

It is found in the cell membrane. Its function is as follows. G-protein coupled receptor involved in hard keratin expression and likely plays a role in the development of hair and nails. This is G-protein coupled receptor family C group 5 member D (GPRC5D) from Homo sapiens (Human).